The chain runs to 341 residues: Holliday junction branch migration complex subunit RuvB (341 aa).

Positions 4 to 185 (TDRLIVPTAV…FGIVARLEFY (182 aa)) are large ATPase domain (RuvB-L). ATP is bound by residues Leu-24, Arg-25, Gly-66, Lys-69, Thr-70, Thr-71, 132-134 (EDF), Arg-175, Tyr-185, and Arg-222. Thr-70 is a binding site for Mg(2+). A small ATPAse domain (RuvB-S) region spans residues 186–256 (SAEELGYIVH…VADAALVMLD (71 aa)). The head domain (RuvB-H) stretch occupies residues 259–341 (RAGLDVMDRK…ATPASDAELF (83 aa)). Positions 295, 314, and 319 each coordinate DNA.

It belongs to the RuvB family. In terms of assembly, homohexamer. Forms an RuvA(8)-RuvB(12)-Holliday junction (HJ) complex. HJ DNA is sandwiched between 2 RuvA tetramers; dsDNA enters through RuvA and exits via RuvB. An RuvB hexamer assembles on each DNA strand where it exits the tetramer. Each RuvB hexamer is contacted by two RuvA subunits (via domain III) on 2 adjacent RuvB subunits; this complex drives branch migration. In the full resolvosome a probable DNA-RuvA(4)-RuvB(12)-RuvC(2) complex forms which resolves the HJ.

It localises to the cytoplasm. It catalyses the reaction ATP + H2O = ADP + phosphate + H(+). Its function is as follows. The RuvA-RuvB-RuvC complex processes Holliday junction (HJ) DNA during genetic recombination and DNA repair, while the RuvA-RuvB complex plays an important role in the rescue of blocked DNA replication forks via replication fork reversal (RFR). RuvA specifically binds to HJ cruciform DNA, conferring on it an open structure. The RuvB hexamer acts as an ATP-dependent pump, pulling dsDNA into and through the RuvAB complex. RuvB forms 2 homohexamers on either side of HJ DNA bound by 1 or 2 RuvA tetramers; 4 subunits per hexamer contact DNA at a time. Coordinated motions by a converter formed by DNA-disengaged RuvB subunits stimulates ATP hydrolysis and nucleotide exchange. Immobilization of the converter enables RuvB to convert the ATP-contained energy into a lever motion, pulling 2 nucleotides of DNA out of the RuvA tetramer per ATP hydrolyzed, thus driving DNA branch migration. The RuvB motors rotate together with the DNA substrate, which together with the progressing nucleotide cycle form the mechanistic basis for DNA recombination by continuous HJ branch migration. Branch migration allows RuvC to scan DNA until it finds its consensus sequence, where it cleaves and resolves cruciform DNA. The sequence is that of Holliday junction branch migration complex subunit RuvB from Thiobacillus denitrificans (strain ATCC 25259 / T1).